Here is a 179-residue protein sequence, read N- to C-terminus: Large ribosomal subunit protein uL5 (179 aa).

This sequence belongs to the universal ribosomal protein uL5 family. In terms of assembly, part of the 50S ribosomal subunit; part of the 5S rRNA/L5/L18/L25 subcomplex. Contacts the 5S rRNA and the P site tRNA. Forms a bridge to the 30S subunit in the 70S ribosome.

Its function is as follows. This is one of the proteins that bind and probably mediate the attachment of the 5S RNA into the large ribosomal subunit, where it forms part of the central protuberance. In the 70S ribosome it contacts protein S13 of the 30S subunit (bridge B1b), connecting the 2 subunits; this bridge is implicated in subunit movement. Contacts the P site tRNA; the 5S rRNA and some of its associated proteins might help stabilize positioning of ribosome-bound tRNAs. The chain is Large ribosomal subunit protein uL5 from Dictyoglomus turgidum (strain DSM 6724 / Z-1310).